A 1132-amino-acid chain; its full sequence is Cytospin-A (1132 aa).

Residues M1–K166 are disordered. Composition is skewed to low complexity over residues S73 to S109 and S119 to S129. The segment covering S150–S159 has biased composition (basic and acidic residues). Positions D226–Q268 form a coiled coil. A disordered region spans residues A301–E381. A compositionally biased stretch (polar residues) spans S333–D343. Residues A348–G377 show a composition bias toward low complexity. 2 coiled-coil regions span residues A385–L440 and R478–V798. 2 disordered regions span residues T869–V895 and S939–P1016. Positions A875–T889 are enriched in pro residues. The segment covering Q946–R961 has biased composition (polar residues). Over residues R962–S972 the composition is skewed to basic and acidic residues. Residues A979–S1000 are compositionally biased toward low complexity. In terms of domain architecture, Calponin-homology (CH) spans G1026–E1131.

Belongs to the cytospin-A family. As to quaternary structure, may interact with both microtubules and actin cytoskeleton.

It localises to the cytoplasm. The protein localises to the cytoskeleton. The protein resides in the spindle. Its subcellular location is the cell junction. It is found in the gap junction. Its function is as follows. Involved in cytokinesis and spindle organization. May play a role in actin cytoskeleton organization and microtubule stabilization and hence required for proper cell adhesion and migration. This Danio rerio (Zebrafish) protein is Cytospin-A (specc1la).